The primary structure comprises 168 residues: Oocyte-secreted protein 2 (168 aa).

A signal peptide spans 1 to 21; it reads MGVSMALEVLVYLAVLVWTCA.

It belongs to the PLAC1 family. As to expression, expressed in ovaries. Highly expressed in the germinal vesicles oocytes and metaphase II oocytes.

Its subcellular location is the secreted. It is found in the cytoplasm. The sequence is that of Oocyte-secreted protein 2 (Oosp2) from Mus musculus (Mouse).